We begin with the raw amino-acid sequence, 1538 residues long: Lysophospholipase nte1 (1538 aa).

Residues 1 to 74 are Cytoplasmic-facing; sequence MATDGGPLAA…PPPTPSTMAG (74 aa). A helical transmembrane segment spans residues 75–95; sequence WFGWVFSFFFQVIPSVLYWVI. The Lumenal segment spans residues 96-117; sequence TFATITLPTWLFTLFSMSLTFT. Residues 118–138 traverse the membrane as a helical segment; sequence MNFTTLLLIALAIVSTISWFI. At 139-1538 the chain is on the cytoplasmic side; the sequence is RYRFLNMYSR…RTLAPRRASI (1400 aa). Disordered stretches follow at residues 242 to 264, 302 to 393, and 529 to 559; these read KPNV…DHRV, EGSS…KSVH, and AAQS…GDLL. The segment covering 302–314 has biased composition (low complexity); it reads EGSSSSASSVGPS. The segment covering 329-345 has biased composition (basic and acidic residues); that stretch reads GLEDSPRSNFVRDHGDS. Residues 692–811 and 856–976 each bind a nucleoside 3',5'-cyclic phosphate; these read GGTS…QGYV and RLTS…IAQR. Residues 1235–1399 enclose the PNPLA domain; that stretch reads LVLGGGGARG…IDNLTVTHMK (165 aa). A GXGXXG motif is present at residues 1239–1244; it reads GGGARG. The GXSXG motif lies at 1266 to 1270; it reads GTSIG. The active-site Nucleophile is the Ser1268. Asp1386 acts as the Proton acceptor in catalysis. A DGA/G motif is present at residues 1386–1388; it reads DGG. Positions 1517–1538 are disordered; sequence LPEETEEKKKLQRTLAPRRASI.

The protein belongs to the NTE family.

It localises to the endoplasmic reticulum membrane. The enzyme catalyses a 1-acyl-sn-glycero-3-phosphocholine + H2O = sn-glycerol 3-phosphocholine + a fatty acid + H(+). Inhibited by organophosphorus esters. In terms of biological role, intracellular phospholipase B that catalyzes the double deacylation of phosphatidylcholine (PC) to glycerophosphocholine (GroPCho). Plays an important role in membrane lipid homeostasis. Responsible for the rapid PC turnover in response to inositol, elevated temperatures, or when choline is present in the growth medium. The sequence is that of Lysophospholipase nte1 (nte1) from Aspergillus oryzae (strain ATCC 42149 / RIB 40) (Yellow koji mold).